Consider the following 92-residue polypeptide: Putative septation protein SpoVG (92 aa).

This sequence belongs to the SpoVG family.

Its function is as follows. Could be involved in septation. The polypeptide is Putative septation protein SpoVG (Thermoanaerobacter sp. (strain X514)).